We begin with the raw amino-acid sequence, 344 residues long: L-rhamnose-proton symporter (344 aa).

10 consecutive transmembrane segments (helical) span residues 4–24, 38–58, 68–88, 101–121, 137–157, 175–195, 207–227, 255–275, 290–310, and 324–344; these read PILL…CFYA, WSLG…WWLL, FDMA…IGNI, MGIG…TPVL, TLLG…AGLL, LILA…MDAA, INAL…GAVV, LIAN…QFFF, ISWM…GLLF, and LVLG…GMAA.

The protein belongs to the L-rhamnose transporter (TC 2.A.7.6) family.

It localises to the cell inner membrane. The enzyme catalyses L-rhamnopyranose(in) + H(+)(in) = L-rhamnopyranose(out) + H(+)(out). Uptake of L-rhamnose across the cytoplasmic membrane with the concomitant transport of protons into the cell (symport system). The chain is L-rhamnose-proton symporter from Pectobacterium carotovorum subsp. carotovorum (strain PC1).